A 125-amino-acid polypeptide reads, in one-letter code: Glycine cleavage system H protein (125 aa).

The Lipoyl-binding domain occupies 23 to 104 (VVYIGITDYA…PYENWILKVK (82 aa)). Residue Lys-64 is modified to N6-lipoyllysine.

It belongs to the GcvH family. As to quaternary structure, the glycine cleavage system is composed of four proteins: P, T, L and H. Requires (R)-lipoate as cofactor.

The glycine cleavage system catalyzes the degradation of glycine. The H protein shuttles the methylamine group of glycine from the P protein to the T protein. This chain is Glycine cleavage system H protein, found in Clostridioides difficile (strain 630) (Peptoclostridium difficile).